The sequence spans 193 residues: NADH-quinone oxidoreductase subunit B (193 aa).

A compositionally biased stretch (polar residues) spans 1–11 (MGLTGTNTTLV). Positions 1–23 (MGLTGTNTTLVAPQPKGILDPRT) are disordered. The [4Fe-4S] cluster site is built by Cys72, Cys73, Cys137, and Cys167.

Belongs to the complex I 20 kDa subunit family. NDH-1 is composed of 14 different subunits. Subunits NuoB, C, D, E, F, and G constitute the peripheral sector of the complex. The cofactor is [4Fe-4S] cluster.

The protein resides in the cell inner membrane. The enzyme catalyses a quinone + NADH + 5 H(+)(in) = a quinol + NAD(+) + 4 H(+)(out). In terms of biological role, NDH-1 shuttles electrons from NADH, via FMN and iron-sulfur (Fe-S) centers, to quinones in the respiratory chain. Couples the redox reaction to proton translocation (for every two electrons transferred, four hydrogen ions are translocated across the cytoplasmic membrane), and thus conserves the redox energy in a proton gradient. The polypeptide is NADH-quinone oxidoreductase subunit B (Brucella canis (strain ATCC 23365 / NCTC 10854 / RM-666)).